The primary structure comprises 115 residues: Large ribosomal subunit protein bL19 (115 aa).

The protein belongs to the bacterial ribosomal protein bL19 family.

This protein is located at the 30S-50S ribosomal subunit interface and may play a role in the structure and function of the aminoacyl-tRNA binding site. This is Large ribosomal subunit protein bL19 from Nitratidesulfovibrio vulgaris (strain ATCC 29579 / DSM 644 / CCUG 34227 / NCIMB 8303 / VKM B-1760 / Hildenborough) (Desulfovibrio vulgaris).